The sequence spans 172 residues: Nicotinamide-nucleotide adenylyltransferase (172 aa).

This sequence belongs to the archaeal NMN adenylyltransferase family.

Its subcellular location is the cytoplasm. It catalyses the reaction beta-nicotinamide D-ribonucleotide + ATP + H(+) = diphosphate + NAD(+). It functions in the pathway cofactor biosynthesis; NAD(+) biosynthesis; NAD(+) from nicotinamide D-ribonucleotide: step 1/1. The polypeptide is Nicotinamide-nucleotide adenylyltransferase (Sulfurisphaera tokodaii (strain DSM 16993 / JCM 10545 / NBRC 100140 / 7) (Sulfolobus tokodaii)).